We begin with the raw amino-acid sequence, 94 residues long: Small ribosomal subunit protein uS19c (94 aa).

It belongs to the universal ribosomal protein uS19 family.

Its subcellular location is the plastid. It localises to the chloroplast. Its function is as follows. Protein S19 forms a complex with S13 that binds strongly to the 16S ribosomal RNA. In Euglena gracilis, this protein is Small ribosomal subunit protein uS19c (rps19).